We begin with the raw amino-acid sequence, 246 residues long: uncharacterized protein (246 aa).

2 stretches are compositionally biased toward basic residues: residues 1–10 (MVWRFQKHIG) and 79–97 (TRRRGAGQRHCNQKPKAGR). The disordered stretch occupies residues 1 to 184 (MVWRFQKHIG…LPPAHVPPTL (184 aa)). Positions 158–180 (PPFPPPPPPGDPTPPSPLPPAHV) are enriched in pro residues.

This is an uncharacterized protein from Homo sapiens (Human).